A 289-amino-acid polypeptide reads, in one-letter code: MPELPEVEVVRRGLQAHVTGRTITEVRVHHPRAVRRHDAGPADLTARLRGARINGTDRRGKYLWLTLNTAGVHRPTDTALVVHLGMSGQMLLGAVPCAAHVRISALLDDGTVLSFADQRTFGGWLLADLVTVDGSVVPVPVAHLARDPLDPRFDCDAVVKVLRRKHSELKRQLLDQRVVSGIGNIYADEALWRAKVNGAHVAATLRCRRLGAVLHAAADVMREALAKGGTSFDSLYVNVNGESGYFERSLDAYGREGENCRRCGAVIRRERFMNRSSFYCPRCQPRPRK.

Pro-2 (schiff-base intermediate with DNA) is an active-site residue. Catalysis depends on Glu-3, which acts as the Proton donor. Catalysis depends on Lys-61, which acts as the Proton donor; for beta-elimination activity. 3 residues coordinate DNA: His-100, Arg-119, and Lys-165. The FPG-type zinc-finger motif lies at 251–285 (DAYGREGENCRRCGAVIRRERFMNRSSFYCPRCQP). Residue Arg-275 is the Proton donor; for delta-elimination activity of the active site.

The protein belongs to the FPG family. Monomer. Zn(2+) serves as cofactor.

The catalysed reaction is Hydrolysis of DNA containing ring-opened 7-methylguanine residues, releasing 2,6-diamino-4-hydroxy-5-(N-methyl)formamidopyrimidine.. It catalyses the reaction 2'-deoxyribonucleotide-(2'-deoxyribose 5'-phosphate)-2'-deoxyribonucleotide-DNA = a 3'-end 2'-deoxyribonucleotide-(2,3-dehydro-2,3-deoxyribose 5'-phosphate)-DNA + a 5'-end 5'-phospho-2'-deoxyribonucleoside-DNA + H(+). Its function is as follows. Involved in base excision repair of DNA damaged by oxidation or by mutagenic agents. Acts as a DNA glycosylase that recognizes and removes damaged bases. Has a preference for oxidized purines, such as 7,8-dihydro-8-oxoguanine (8-oxoG) when paired with C, G or T, as well as methyl-faPy (formanidopyrimidine residues) in poly(dG-dC) and spiroiminodihydantoin:C base pairs. Unlike its E.coli ortholog has no activity on 8-oxoG:A. Has AP (apurinic/apyrimidinic) lyase activity and introduces nicks in the DNA strand. Cleaves the DNA backbone by beta-delta elimination to generate a single-strand break at the site of the removed base with both 3'- and 5'-phosphates. Cleaves ssDNA containing an AP site. Complements the H(2)O(2) sensitivity of an M.smegmatis fpg disruption mutant; upon expression in M.smegmatis excises 8-oxoG from dsDNA. This Mycobacterium tuberculosis (strain ATCC 25618 / H37Rv) protein is Formamidopyrimidine-DNA glycosylase 1 (fpg1).